Here is a 527-residue protein sequence, read N- to C-terminus: Protein TIC 56, chloroplastic (527 aa).

Residues 1–48 (MSSMNFNPFQNWFEKPPNPVPSINFVSLADSFFPKSQSPNFASIGLPK) constitute a chloroplast transit peptide. The tract at residues 43 to 67 (SIGLPKFSKKSPKPETAGTDEPGPY) is disordered. N350 carries the post-translational modification Deamidated asparagine. Positions 491-508 (RREEELREEDLKHYSGRT) are enriched in basic and acidic residues. A disordered region spans residues 491-527 (RREEELREEDLKHYSGRTDEDEEEEEEEDDDSNSKKD). Positions 509-521 (DEDEEEEEEEDDD) are enriched in acidic residues.

Part of the Tic complex. Component of the 1-MD complex, composed of TIC20-I, TIC214, TIC100 and TIC56. Interacts with the translocating preproteins. Hydrolysis of ATP is essential for the formation of this complex. The 1-MD complex interacts with TIC21.

The protein resides in the plastid. It localises to the chloroplast inner membrane. Functionally, involved in protein precursor import into chloroplasts. May be part of an intermediate translocation complex acting as a protein-conducting channel at the inner envelope. This is Protein TIC 56, chloroplastic from Arabidopsis thaliana (Mouse-ear cress).